The following is a 180-amino-acid chain: Alpha-S2-casein-like A (180 aa).

The signal sequence occupies residues 1–15; it reads MRFFVFTCLLAVALA. Phosphoserine occurs at positions 23 and 25. Residues 46–66 form a disordered region; sequence PTNQETPSVSSSEESVEVQTE.

It belongs to the alpha-casein family. Mammary gland specific. Secreted in milk.

The protein resides in the secreted. In terms of biological role, important role in the capacity of milk to transport calcium phosphate. The protein is Alpha-S2-casein-like A (CSN1S2A) of Oryctolagus cuniculus (Rabbit).